Here is a 392-residue protein sequence, read N- to C-terminus: Chloramphenicol resistance protein (392 aa).

The next 12 membrane-spanning stretches (helical) occupy residues 6–26, 42–62, 71–91, 100–120, 129–149, 160–180, 205–225, 239–259, 268–288, 294–314, 332–352, and 358–378; these read YLLA…AGLV, TLTS…AALA, LLGF…TTSF, VAAL…AALV, LAVL…GGSL, FWAV…AIPA, LLLA…SFTF, LWIS…VTVA, AQVL…LAML, ALLT…STLI, ATAA…TTLG, and LGPL…AFPF.

This sequence belongs to the major facilitator superfamily.

Its subcellular location is the cell membrane. The sequence is that of Chloramphenicol resistance protein (cmlR) from Streptomyces lividans.